A 615-amino-acid chain; its full sequence is 1-deoxy-D-xylulose-5-phosphate synthase (615 aa).

Thiamine diphosphate-binding positions include His-72 and 111–113; that span reads GHS. Asp-142 lines the Mg(2+) pocket. Thiamine diphosphate is bound by residues 143 to 144, Asn-171, Tyr-278, and Glu-360; that span reads GA. Asn-171 lines the Mg(2+) pocket.

This sequence belongs to the transketolase family. DXPS subfamily. As to quaternary structure, homodimer. Mg(2+) is required as a cofactor. Thiamine diphosphate serves as cofactor.

It catalyses the reaction D-glyceraldehyde 3-phosphate + pyruvate + H(+) = 1-deoxy-D-xylulose 5-phosphate + CO2. The protein operates within metabolic intermediate biosynthesis; 1-deoxy-D-xylulose 5-phosphate biosynthesis; 1-deoxy-D-xylulose 5-phosphate from D-glyceraldehyde 3-phosphate and pyruvate: step 1/1. Its function is as follows. Catalyzes the acyloin condensation reaction between C atoms 2 and 3 of pyruvate and glyceraldehyde 3-phosphate to yield 1-deoxy-D-xylulose-5-phosphate (DXP). This Campylobacter jejuni subsp. jejuni serotype O:23/36 (strain 81-176) protein is 1-deoxy-D-xylulose-5-phosphate synthase.